Here is a 148-residue protein sequence, read N- to C-terminus: Lysozyme C (148 aa).

Residues 1–18 form the signal peptide; it reads MKALIILGLVLLSVMVQA. The region spanning 19 to 148 is the C-type lysozyme domain; the sequence is KVFERCELAR…LRQYIQGCGV (130 aa). 4 disulfides stabilise this stretch: Cys-24/Cys-146, Cys-48/Cys-134, Cys-83/Cys-99, and Cys-95/Cys-113. Active-site residues include Glu-53 and Asp-71.

It belongs to the glycosyl hydrolase 22 family. As to quaternary structure, monomer.

Its subcellular location is the secreted. It carries out the reaction Hydrolysis of (1-&gt;4)-beta-linkages between N-acetylmuramic acid and N-acetyl-D-glucosamine residues in a peptidoglycan and between N-acetyl-D-glucosamine residues in chitodextrins.. In terms of biological role, lysozymes have primarily a bacteriolytic function; those in tissues and body fluids are associated with the monocyte-macrophage system and enhance the activity of immunoagents. This Hylobates lar (Lar gibbon) protein is Lysozyme C (LYZ).